The sequence spans 620 residues: KIF-binding protein (620 aa).

Coiled-coil stretches lie at residues 30–64 and 133–169; these read YKSK…QDIL and LIKS…QLQN.

Belongs to the KIF-binding protein family.

The protein localises to the cytoplasm. The protein resides in the cytoskeleton. In terms of biological role, activator of KIF1B plus-end-directed microtubule motor activity. Required for organization of axonal microtubules, and axonal outgrowth and maintenance during peripheral and central nervous system development. This is KIF-binding protein (kifbp) from Dictyostelium discoideum (Social amoeba).